Reading from the N-terminus, the 892-residue chain is Bifunctional uridylyltransferase/uridylyl-removing enzyme (892 aa).

The interval 1–348 (MPNFTGNTRP…LVDAKVHVRP (348 aa)) is uridylyltransferase. Residues 349-710 (INERFQARNG…RIHNQEPGTM (362 aa)) form a uridylyl-removing region. The region spanning 467-589 (VDEHTLFLIH…VGDERRLNHL (123 aa)) is the HD domain. ACT domains lie at 711–786 (EVFI…LTQP) and 822–892 (VMEL…YLER).

It belongs to the GlnD family. Mg(2+) serves as cofactor.

It carries out the reaction [protein-PII]-L-tyrosine + UTP = [protein-PII]-uridylyl-L-tyrosine + diphosphate. The catalysed reaction is [protein-PII]-uridylyl-L-tyrosine + H2O = [protein-PII]-L-tyrosine + UMP + H(+). Uridylyltransferase (UTase) activity is inhibited by glutamine, while glutamine activates uridylyl-removing (UR) activity. Modifies, by uridylylation and deuridylylation, the PII regulatory proteins (GlnB and homologs), in response to the nitrogen status of the cell that GlnD senses through the glutamine level. Under low glutamine levels, catalyzes the conversion of the PII proteins and UTP to PII-UMP and PPi, while under higher glutamine levels, GlnD hydrolyzes PII-UMP to PII and UMP (deuridylylation). Thus, controls uridylylation state and activity of the PII proteins, and plays an important role in the regulation of nitrogen assimilation and metabolism. This chain is Bifunctional uridylyltransferase/uridylyl-removing enzyme, found in Nitrosococcus oceani (strain ATCC 19707 / BCRC 17464 / JCM 30415 / NCIMB 11848 / C-107).